Consider the following 379-residue polypeptide: UDP-4-amino-4-deoxy-L-arabinose--oxoglutarate aminotransferase (379 aa).

Residue K182 is modified to N6-(pyridoxal phosphate)lysine.

The protein belongs to the DegT/DnrJ/EryC1 family. ArnB subfamily. As to quaternary structure, homodimer. The cofactor is pyridoxal 5'-phosphate.

The catalysed reaction is UDP-4-amino-4-deoxy-beta-L-arabinose + 2-oxoglutarate = UDP-beta-L-threo-pentopyranos-4-ulose + L-glutamate. It participates in nucleotide-sugar biosynthesis; UDP-4-deoxy-4-formamido-beta-L-arabinose biosynthesis; UDP-4-deoxy-4-formamido-beta-L-arabinose from UDP-alpha-D-glucuronate: step 2/3. The protein operates within bacterial outer membrane biogenesis; lipopolysaccharide biosynthesis. In terms of biological role, catalyzes the conversion of UDP-4-keto-arabinose (UDP-Ara4O) to UDP-4-amino-4-deoxy-L-arabinose (UDP-L-Ara4N). The modified arabinose is attached to lipid A and is required for resistance to polymyxin and cationic antimicrobial peptides. The polypeptide is UDP-4-amino-4-deoxy-L-arabinose--oxoglutarate aminotransferase (Enterobacter sp. (strain 638)).